The sequence spans 274 residues: Large ribosomal subunit protein uL2 (274 aa).

The segment at 223–265 (VVMNPVDHPHGGGEGRTSGGRHPVSPWGMPTKGFKTRKNKRTD) is disordered. Basic residues predominate over residues 256–265 (FKTRKNKRTD).

Belongs to the universal ribosomal protein uL2 family. Part of the 50S ribosomal subunit. Forms a bridge to the 30S subunit in the 70S ribosome.

Functionally, one of the primary rRNA binding proteins. Required for association of the 30S and 50S subunits to form the 70S ribosome, for tRNA binding and peptide bond formation. It has been suggested to have peptidyltransferase activity; this is somewhat controversial. Makes several contacts with the 16S rRNA in the 70S ribosome. The sequence is that of Large ribosomal subunit protein uL2 from Vibrio parahaemolyticus serotype O3:K6 (strain RIMD 2210633).